Here is a 289-residue protein sequence, read N- to C-terminus: uncharacterized protein (289 aa).

This is an uncharacterized protein from Drosophila melanogaster (Fruit fly).